The primary structure comprises 86 residues: Small ribosomal subunit protein uS15c (86 aa).

The protein belongs to the universal ribosomal protein uS15 family. As to quaternary structure, part of the 30S ribosomal subunit.

Its subcellular location is the plastid. The polypeptide is Small ribosomal subunit protein uS15c (rps15) (Cuscuta obtusiflora (Peruvian dodder)).